Consider the following 83-residue polypeptide: Retinal cone rhodopsin-sensitive cGMP 3',5'-cyclic phosphodiesterase subunit gamma (83 aa).

Polar residues predominate over residues 1–17 (MSDNTVLAPPTSNQGPT). Residues 1–51 (MSDNTVLAPPTSNQGPTTPRKGPPKFKQRQTRQFKSKPPKKGVKGFGDDIP) are disordered. A compositionally biased stretch (basic residues) spans 22–43 (GPPKFKQRQTRQFKSKPPKKGV).

The protein belongs to the rod/cone cGMP-PDE gamma subunit family. In terms of assembly, tetramer composed of two catalytic chains (alpha and beta), and two inhibitory chains (gamma).

It carries out the reaction 3',5'-cyclic GMP + H2O = GMP + H(+). Functionally, participates in processes of transmission and amplification of the visual signal. cGMP-PDEs are the effector molecules in G-protein-mediated phototransduction in vertebrate rods and cones. This Bos taurus (Bovine) protein is Retinal cone rhodopsin-sensitive cGMP 3',5'-cyclic phosphodiesterase subunit gamma (PDE6H).